We begin with the raw amino-acid sequence, 199 residues long: Charged multivesicular body protein 1B2 (199 aa).

The stretch at 15 to 47 (AKELNRNAKKCDKEEKAEKAKIKKAIQKGNTEV) forms a coiled coil. The interaction with IST1 stretch occupies residues 132 to 156 (MEDTMSSTTTLTTPQNQVDMLLQEM). Positions 167-199 (ELPQGQTGSVGASVASTEQDELSQRLARLRDQV) are disordered. The span at 170-183 (QGQTGSVGASVAST) shows a compositional bias: polar residues. The tract at residues 174–199 (GSVGASVASTEQDELSQRLARLRDQV) is interaction with SPAST. Residues 177 to 199 (GASVASTEQDELSQRLARLRDQV) are a coiled coil. An interaction with VPS4A, MITD1 and STAMBP region spans residues 180-196 (VASTEQDELSQRLARLR). The interval 180 to 199 (VASTEQDELSQRLARLRDQV) is interaction with VTA1. Residues 183–199 (TEQDELSQRLARLRDQV) form an interaction with VPS4B region. The MIT-interacting motif motif lies at 186-196 (DELSQRLARLR).

The protein belongs to the SNF7 family. As to quaternary structure, probable peripherally associated component of the endosomal sorting required for transport complex III (ESCRT-III). ESCRT-III components are thought to multimerize to form a flat lattice on the perimeter membrane of the endosome. Several assembly forms of ESCRT-III may exist that interact and act sequentially. Interacts with CHMP1A. Interacts with VTA1; the interaction probably involves the open conformation of CHMP1B. Interacts with CHMP2A. Interacts with VPS4A; the interaction is direct. Interacts with VPS4B; the interaction is direct. Interacts with SPAST (via MIT domain); the interaction is direct. Interacts with IST1. Interacts with MITD1. Interacts with STAMBP.

The protein localises to the cytoplasm. Its subcellular location is the cytosol. It is found in the endosome. It localises to the late endosome membrane. In terms of biological role, probable peripherally associated component of the endosomal sorting required for transport complex III (ESCRT-III) which is involved in multivesicular bodies (MVBs) formation and sorting of endosomal cargo proteins into MVBs. MVBs contain intraluminal vesicles (ILVs) that are generated by invagination and scission from the limiting membrane of the endosome and mostly are delivered to lysosomes enabling degradation of membrane proteins, such as stimulated growth factor receptors, lysosomal enzymes and lipids. The MVB pathway appears to require the sequential function of ESCRT-O, -I,-II and -III complexes. ESCRT-III proteins mostly dissociate from the invaginating membrane before the ILV is released. The ESCRT machinery also functions in topologically equivalent membrane fission events, such as the terminal stages of cytokinesis. ESCRT-III proteins are believed to mediate the necessary vesicle extrusion and/or membrane fission activities, possibly in conjunction with the AAA ATPase VPS4. Involved in cytokinesis. Involved in recruiting VPS4A and/or VPS4B and SPAST to the midbody of dividing cells. The protein is Charged multivesicular body protein 1B2 of Mus musculus (Mouse).